The chain runs to 120 residues: Ribosome-binding factor A (120 aa).

This sequence belongs to the RbfA family. In terms of assembly, monomer. Binds 30S ribosomal subunits, but not 50S ribosomal subunits or 70S ribosomes.

It is found in the cytoplasm. One of several proteins that assist in the late maturation steps of the functional core of the 30S ribosomal subunit. Associates with free 30S ribosomal subunits (but not with 30S subunits that are part of 70S ribosomes or polysomes). Required for efficient processing of 16S rRNA. May interact with the 5'-terminal helix region of 16S rRNA. The sequence is that of Ribosome-binding factor A from Rickettsia felis (strain ATCC VR-1525 / URRWXCal2) (Rickettsia azadi).